We begin with the raw amino-acid sequence, 89 residues long: Small ribosomal subunit protein uS15 (89 aa).

This sequence belongs to the universal ribosomal protein uS15 family. Part of the 30S ribosomal subunit. Forms a bridge to the 50S subunit in the 70S ribosome, contacting the 23S rRNA.

Functionally, one of the primary rRNA binding proteins, it binds directly to 16S rRNA where it helps nucleate assembly of the platform of the 30S subunit by binding and bridging several RNA helices of the 16S rRNA. Its function is as follows. Forms an intersubunit bridge (bridge B4) with the 23S rRNA of the 50S subunit in the ribosome. The polypeptide is Small ribosomal subunit protein uS15 (Shewanella frigidimarina (strain NCIMB 400)).